Reading from the N-terminus, the 108-residue chain is MERVAKLASERAVVVFTASNCGMCHAVTSLLVGELGVNAAVHELDKDPRGRDMERELARRLNGGGGGGRALPAVFVGGNLVGGANRVMSLHLAGELVPMLKNAGALWL.

Residues 1–107 (MERVAKLASE…PMLKNAGALW (107 aa)) enclose the Glutaredoxin domain. The cysteines at positions 21 and 24 are disulfide-linked. The Responsive for interaction with TGA factors motif lies at 105-108 (ALWL).

Belongs to the glutaredoxin family. CC-type subfamily.

It is found in the cytoplasm. Its subcellular location is the nucleus. Functionally, has a glutathione-disulfide oxidoreductase activity in the presence of NADPH and glutathione reductase. Reduces low molecular weight disulfides and proteins. The protein is Glutaredoxin-C10 (GRXC10) of Oryza sativa subsp. japonica (Rice).